Consider the following 338-residue polypeptide: MSRPSLTRFLIEEQHAGRIDPELRQLITIVSRACKRISIAVSKGALGGVLGDAGTGNVQGEAQKKLDVLSNDILLEANAWGGHLAACASEEMDHSQPVPDQYPSGDFLLLFDPLDGSSNIDVNVSVGTIFSVLRAPKGTEKPGDEHFLQPGTQQVAAGYCIYGPSTMLVLTLGHGTHAFTLEREEGSFLLTQADMRVPEDTAEFAINMSNQRHWEPAMQAYVGDLLAGKDGARGKDFNMRWIASMVADVHRILTRGGIFIYPWDKKDAAKPGKLRLMYEANPMGMLVEQAGGAATTGRERILDIQPTQLHQRVPVFLGSKNEVAEATRYHVEFDKAQG.

4 residues coordinate Mg(2+): Glu90, Asp112, Leu114, and Asp115. Residues 115 to 118 (DGSS), Asn207, and Lys273 contribute to the substrate site. Glu279 is a binding site for Mg(2+).

Belongs to the FBPase class 1 family. As to quaternary structure, homotetramer. It depends on Mg(2+) as a cofactor.

It localises to the cytoplasm. It carries out the reaction beta-D-fructose 1,6-bisphosphate + H2O = beta-D-fructose 6-phosphate + phosphate. It functions in the pathway carbohydrate biosynthesis; gluconeogenesis. This is Fructose-1,6-bisphosphatase class 1 from Xanthomonas campestris pv. campestris (strain 8004).